A 492-amino-acid chain; its full sequence is GTPase Der (492 aa).

EngA-type G domains are found at residues 3–166 (PVVA…VDEV) and 205–378 (IKLA…DSAT). GTP-binding positions include 9–16 (GRPNVGKS), 56–60 (DTGGI), 118–121 (NKTD), 211–218 (GRPNVGKS), 258–262 (DTAGV), and 323–326 (NKWD). One can recognise a KH-like domain in the interval 379 to 463 (RRVSTAMLTR…PIRIQFKEGE (85 aa)).

Belongs to the TRAFAC class TrmE-Era-EngA-EngB-Septin-like GTPase superfamily. EngA (Der) GTPase family. As to quaternary structure, associates with the 50S ribosomal subunit.

In terms of biological role, GTPase that plays an essential role in the late steps of ribosome biogenesis. The chain is GTPase Der from Klebsiella pneumoniae subsp. pneumoniae (strain ATCC 700721 / MGH 78578).